Reading from the N-terminus, the 441-residue chain is Damage-control phosphatase ARMT1 (441 aa).

A2 carries the N-acetylalanine modification. K40 is subject to N6-acetyllysine. Residue S102 is modified to Phosphoserine. Positions 253 and 254 each coordinate Mn(2+). 253–254 (DN) is a substrate binding site. Positions 258 and 291 each coordinate S-adenosyl-L-methionine. Residue D291 coordinates Mn(2+). Substrate is bound by residues 367–371 (DLNYR) and K404. The Subfamily III RTxK motif motif lies at 401–404 (RTLK).

It belongs to the damage-control phosphatase family. Sugar phosphate phosphatase III subfamily. It depends on Mn(2+) as a cofactor. Ni(2+) is required as a cofactor. Post-translationally, automethylated.

It catalyses the reaction beta-D-fructose 1-phosphate + H2O = D-fructose + phosphate. The catalysed reaction is beta-D-fructose 6-phosphate = dihydroxyacetone + D-glyceraldehyde 3-phosphate. The enzyme catalyses L-glutamyl-[protein] + S-adenosyl-L-methionine = [protein]-L-glutamate 5-O-methyl ester + S-adenosyl-L-homocysteine. Its function is as follows. Metal-dependent phosphatase that shows phosphatase activity against several substrates, including fructose-1-phosphate and fructose-6-phosphate. Its preference for fructose-1-phosphate, a strong glycating agent that causes DNA damage rather than a canonical yeast metabolite, suggests a damage-control function in hexose phosphate metabolism. Has also been shown to have O-methyltransferase activity that methylates glutamate residues of target proteins to form gamma-glutamyl methyl ester residues. Possibly methylates PCNA, suggesting it is involved in the DNA damage response. The polypeptide is Damage-control phosphatase ARMT1 (Macaca fascicularis (Crab-eating macaque)).